The sequence spans 398 residues: tRNA pseudouridine synthase D (398 aa).

Aspartate 76 (nucleophile) is an active-site residue. A TRUD domain is found at glycine 151–isoleucine 360.

The protein belongs to the pseudouridine synthase TruD family.

The catalysed reaction is uridine(13) in tRNA = pseudouridine(13) in tRNA. Its function is as follows. Responsible for synthesis of pseudouridine from uracil-13 in transfer RNAs. The polypeptide is tRNA pseudouridine synthase D (Syntrophotalea carbinolica (strain DSM 2380 / NBRC 103641 / GraBd1) (Pelobacter carbinolicus)).